A 122-amino-acid chain; its full sequence is Large ribosomal subunit protein uL14 (122 aa).

Belongs to the universal ribosomal protein uL14 family. As to quaternary structure, part of the 50S ribosomal subunit. Forms a cluster with proteins L3 and L19. In the 70S ribosome, L14 and L19 interact and together make contacts with the 16S rRNA in bridges B5 and B8.

In terms of biological role, binds to 23S rRNA. Forms part of two intersubunit bridges in the 70S ribosome. This is Large ribosomal subunit protein uL14 from Francisella philomiragia subsp. philomiragia (strain ATCC 25017 / CCUG 19701 / FSC 153 / O#319-036).